Here is a 105-residue protein sequence, read N- to C-terminus: uncharacterized protein (105 aa).

Residues 1–27 (MQSPAMKRIKSSSHSRWDGSGSVNEMP) form a disordered region.

The protein localises to the mitochondrion. This is an uncharacterized protein from Arabidopsis thaliana (Mouse-ear cress).